Here is a 359-residue protein sequence, read N- to C-terminus: Prostaglandin D2 receptor (359 aa).

Over 1–21 (MKSPFYRCQNTTSVEKGNSAV) the chain is Extracellular. A glycan (N-linked (GlcNAc...) asparagine) is linked at N10. The helical transmembrane segment at 22-42 (MGGVLFSTGLLGNLLALGLLA) threads the bilayer. Over 43-59 (RSGLGWCSRRPLRPLPS) the chain is Cytoplasmic. A helical membrane pass occupies residues 60–80 (VFYMLVCGLTVTDLLGKCLLS). Residues 81–107 (PVVLAAYAQNRSLRVLAPALDNSLCQA) are Extracellular-facing. N-linked (GlcNAc...) asparagine glycosylation is present at N90. C105 and C183 are joined by a disulfide. A helical membrane pass occupies residues 108-128 (FAFFMSFFGLSSTLQLLAMAL). The Cytoplasmic segment spans residues 129–150 (ECWLSLGHPFFYRRHITLRLGA). Residues 151-171 (LVAPVVSAFSLAFCALPFMGF) form a helical membrane-spanning segment. Topologically, residues 172–195 (GKFVQYCPGTWCFIQMVHEEGSLS) are extracellular. Residues 196 to 216 (VLGYSVLYSSLMALLVLATVL) form a helical membrane-spanning segment. At 217-262 (CNLGAMRNLYAMHRRLQRHPRSCTRDCAEPRADGREASPQPLEELD) the chain is on the cytoplasmic side. The helical transmembrane segment at 263–283 (HLLLLALMTVLFTMCSLPVIY) threads the bilayer. Topologically, residues 284–310 (RAYYGAFKDVKEKNRTSEEAEDLRALR) are extracellular. Residue N297 is glycosylated (N-linked (GlcNAc...) asparagine). A helical membrane pass occupies residues 311–331 (FLSVISIVDPWIFIIFRSPVF). The Cytoplasmic segment spans residues 332–359 (RIFFHKIFIRPLRYRSRCSNSTNMESSL).

This sequence belongs to the G-protein coupled receptor 1 family. In terms of tissue distribution, expressed in retinal choroid, ciliary epithelium, longitudinal and circular ciliary muscles, iris, small intestine and platelet membranes.

The protein localises to the cell membrane. Receptor for prostaglandin D2 (PGD2). The activity of this receptor is mainly mediated by G(s) proteins that stimulate adenylate cyclase, resulting in an elevation of intracellular cAMP. A mobilization of calcium is also observed, but without formation of inositol 1,4,5-trisphosphate. Involved in PLA2G3-dependent maturation of mast cells. PLA2G3 is secreted by immature mast cells and acts on nearby fibroblasts upstream to PTDGS to synthesize PGD2, which in turn promotes mast cell maturation and degranulation via PTGDR. This chain is Prostaglandin D2 receptor (PTGDR), found in Homo sapiens (Human).